Consider the following 578-residue polypeptide: Asparagine synthetase [glutamine-hydrolyzing] 3 (578 aa).

Cysteine 2 (for GATase activity) is an active-site residue. The Glutamine amidotransferase type-2 domain maps to 2 to 185 (CGILAVLGCV…PGHIYSSKQG (184 aa)). L-glutamine is bound by residues 50-54 (RLAIV), 75-77 (NGE), and aspartate 98. One can recognise an Asparagine synthetase domain in the interval 210–450 (VRNTFEKAVI…LPKHILYRQK (241 aa)). ATP is bound by residues leucine 231, isoleucine 267, and 341–342 (SG). Residues 555–572 (GEDKTEDSRPEKLQKLAE) show a composition bias toward basic and acidic residues. The disordered stretch occupies residues 555-578 (GEDKTEDSRPEKLQKLAEKTPAIV).

It carries out the reaction L-aspartate + L-glutamine + ATP + H2O = L-asparagine + L-glutamate + AMP + diphosphate + H(+). It functions in the pathway amino-acid biosynthesis; L-asparagine biosynthesis. Functionally, essential for nitrogen assimilation, distribution and remobilization within the plant via the phloem. The polypeptide is Asparagine synthetase [glutamine-hydrolyzing] 3 (ASN3) (Arabidopsis thaliana (Mouse-ear cress)).